A 126-amino-acid polypeptide reads, in one-letter code: Holo-[acyl-carrier-protein] synthase (126 aa).

Asp9 and Glu58 together coordinate Mg(2+).

Belongs to the P-Pant transferase superfamily. AcpS family. Requires Mg(2+) as cofactor.

The protein resides in the cytoplasm. The enzyme catalyses apo-[ACP] + CoA = holo-[ACP] + adenosine 3',5'-bisphosphate + H(+). Its function is as follows. Transfers the 4'-phosphopantetheine moiety from coenzyme A to a Ser of acyl-carrier-protein. The protein is Holo-[acyl-carrier-protein] synthase of Erwinia tasmaniensis (strain DSM 17950 / CFBP 7177 / CIP 109463 / NCPPB 4357 / Et1/99).